We begin with the raw amino-acid sequence, 71 residues long: Translation initiation factor IF-1 (71 aa).

The 71-residue stretch at 1 to 71 (MSKDDLIQFT…LTKGRVIHRH (71 aa)) folds into the S1-like domain.

Belongs to the IF-1 family. Component of the 30S ribosomal translation pre-initiation complex which assembles on the 30S ribosome in the order IF-2 and IF-3, IF-1 and N-formylmethionyl-tRNA(fMet); mRNA recruitment can occur at any time during PIC assembly.

The protein resides in the cytoplasm. In terms of biological role, one of the essential components for the initiation of protein synthesis. Stabilizes the binding of IF-2 and IF-3 on the 30S subunit to which N-formylmethionyl-tRNA(fMet) subsequently binds. Helps modulate mRNA selection, yielding the 30S pre-initiation complex (PIC). Upon addition of the 50S ribosomal subunit IF-1, IF-2 and IF-3 are released leaving the mature 70S translation initiation complex. This Rickettsia felis (strain ATCC VR-1525 / URRWXCal2) (Rickettsia azadi) protein is Translation initiation factor IF-1.